A 497-amino-acid chain; its full sequence is Low affinity K(+) transporter 1 (497 aa).

Topologically, residues 1 to 29 are extracellular; it reads MFNHDWKYSINSKTFADLNIELFRNHKFK. A helical membrane pass occupies residues 30-50; that stretch reads TVLNYIIGVVGWNGLKLALFV. The Cytoplasmic portion of the chain corresponds to 51–80; the sequence is SDIYTCIKLLAFNSWSNNIIKPYLPFKISK. The helical transmembrane segment at 81 to 101 threads the bilayer; sequence WLFSGCILASIVLLIWEAIAG. Residues 102–216 lie on the Extracellular side of the membrane; the sequence is MRIYKTGNIS…TNHEEAVILS (115 aa). The chain crosses the membrane as a helical span at residues 217-237; the sequence is LMLFSFIIWALFVFKFLLAVI. The Cytoplasmic portion of the chain corresponds to 238–497; that stretch reads CSIFVYYKII…EDEDRTYNYT (260 aa). Serine 291 and serine 319 each carry phosphoserine. Residues 420–469 form a disordered region; the sequence is EFHGPLDSMPNTTNNIRNFNSNSSRPRPPPLQTKSSINSKADSNDNGRIY. The segment covering 429–444 has biased composition (low complexity); the sequence is PNTTNNIRNFNSNSSR. A compositionally biased stretch (polar residues) spans 451-465; the sequence is QTKSSINSKADSNDN.

The protein belongs to the KCH1 low affinity K(+) transporter family.

Its subcellular location is the vacuole membrane. The protein resides in the cell membrane. It carries out the reaction K(+)(in) = K(+)(out). Functionally, low affinity potassium transporter that, with PRM6/KCH2, participates in high-affinity Ca(2+) influx system (HACS) activation during the response to mating pheromone. Directly promotes K(+) influx and HACS may electrochemically respond to this K(+) influx. KCH1 and KCH2 act at the apex of the calcium signaling pathway that is used for survival during prolonged exposures to mating pheromones. This is Low affinity K(+) transporter 1 from Saccharomyces cerevisiae (strain ATCC 204508 / S288c) (Baker's yeast).